Here is a 198-residue protein sequence, read N- to C-terminus: dITP/XTP pyrophosphatase (198 aa).

A substrate-binding site is contributed by 8–13 (TKNKGK). Asp69 acts as the Proton acceptor in catalysis. A Mg(2+)-binding site is contributed by Asp69. Residues Ser70, 152–155 (FGYD), Lys175, and 180–181 (HR) each bind substrate.

This sequence belongs to the HAM1 NTPase family. Homodimer. Requires Mg(2+) as cofactor.

It catalyses the reaction XTP + H2O = XMP + diphosphate + H(+). The catalysed reaction is dITP + H2O = dIMP + diphosphate + H(+). The enzyme catalyses ITP + H2O = IMP + diphosphate + H(+). In terms of biological role, pyrophosphatase that catalyzes the hydrolysis of nucleoside triphosphates to their monophosphate derivatives, with a high preference for the non-canonical purine nucleotides XTP (xanthosine triphosphate), dITP (deoxyinosine triphosphate) and ITP. Seems to function as a house-cleaning enzyme that removes non-canonical purine nucleotides from the nucleotide pool, thus preventing their incorporation into DNA/RNA and avoiding chromosomal lesions. In Shouchella clausii (strain KSM-K16) (Alkalihalobacillus clausii), this protein is dITP/XTP pyrophosphatase.